A 687-amino-acid chain; its full sequence is MDTLEPTAVDTHVSAEQILRDVYKKGQKARGSTNIDILDLEELREYQRRKRTEYEGYLKRNRLDMGQWIRYAQFEIEQHDMRRARSIFERALLVDSSFIPLWIRYIDAELKVKCINHARNLMNRAISTLPRVDKLWYKYLIVEESLNNVEIVRSLYTKWCSLEPGVNAWNSFVDFEIRQKNWNGVREIYSKYVMAHPQMQTWLKWVRFENRHGNTEFTRSVYSLAIDTVANLQNLQIWSDMEVAKLVNSFAHWEAAQQEYERSSALYQIAIEKWPSNQLLKAGLLDFEKQFGDINSIEETISYKRKMEYETILSNNAYDYDTWWLYLDLISESFPKQIMQTFEKAIVDSRPKELSKNVQWKRYIYLWMRYICYVELELENSLLEEELFQRLIDDIIPHKHFTFSKIWLMYAKFLIRHDDVPKARKILGKAIGLCPKAKTFKGYIELEVKLKEFDRVRKIYEKFIEFQPSDLQIWSQYGELEENLGDWDRVRGIYTIALDENSDFLTKEAKIVLLQKYITFETESQEFEKARKLYRRYLELNQYSPQSWIEFAMYQTSTPTEQQLLDLAKLQSENVDEDIEFEITDENKLEARKVFEEAIVFFKEKDDKQGRLSILEALKDYEETYGTELDQETVKKRFPKVIKKVRLQNGVEEEFVDYIFPDDIDDDKPKPSKFLELAKKWKQEQAL.

13 HAT repeats span residues 45 to 77 (EYQR…FEIE), 79 to 111 (HDMR…AELK), 113 to 145 (KCIN…VEES), 147 to 178 (NNVE…FEIR), 180 to 211 (KNWN…FENR), 213 to 247 (GNTE…AKLV), 251 to 283 (AHWE…LKAG), 300 to 332 (TISY…LISE), 337 to 369 (QIMQ…LWMR), 383 to 416 (LEEE…FLIR), 451 to 483 (KEFD…LEEN), 525 to 557 (QEFE…YQTS), and 629 to 661 (LDQE…YIFP).

The protein belongs to the crooked-neck family. Belongs to the NTC complex (or PRP19-associated complex), composed of at least CEF1, CLF1, ISY1, NTC20, SNT309, SYF1, SYF2, and PRP19. The NTC complex associates with the spliceosome after the release of the U1 and U4 snRNAs and forms the CWC spliceosome subcomplex (or CEF1-associated complex) reminiscent of a late-stage spliceosome composed also of the U2, U5 and U6 snRNAs and at least BUD13, BUD31, BRR2, CDC40, CUS1, CWC2, CWC15, CWC21, CWC22, CWC23, CWC24, CWC25, CWC27, ECM2, HSH155, IST3, LEA1, MSL1, PRP8, PRP9, PRP11, PRP21, PRP22, PRP45, PRP46, SLU7, SMB1, SMD1, SMD2, SMD3, SMX2, SMX3, SNU114, SPP2, RSE1 and YJU2. Interacts with CEF1, ISY1, MUD2, NTC20, PRP22, PRP40, PRP46, SYF1, SYF2, and the ORC2 subunit of the origin recognition complex.

Its subcellular location is the nucleus. Involved in pre-mRNA splicing and cell cycle progression. Required for the spliceosome assembly by promoting the functional integration of the U4/U6.U5 tri-snRNP particle into the U1-, U2-dependent pre-spliceosome. Also recruits PRP19 to the spliceosome, as a component of the NTC complex (or PRP19-associated complex). The association of the NTC complex to the spliceosome mediates conformational rearrangement or stabilizes the structure of the spliceosome after U4 snRNA dissociation, which leads to spliceosome maturation. Required for initiation of the DNA replication by binding the RNA replication origins, probably through its interaction with the origin recognition complex (ORC). The chain is Pre-mRNA-splicing factor CLF1 (CLF1) from Saccharomyces cerevisiae (strain ATCC 204508 / S288c) (Baker's yeast).